Consider the following 125-residue polypeptide: Secreted RxLR effector protein 22 (125 aa).

The signal sequence occupies residues 1 to 26; it reads MRLIYSALVTAAAMVAISNGSTPARG. The interval 21-66 is disordered; the sequence is STPARGNEVETRSLRGGNEVDSSMSDDGERAARGGGRVRSQASGVT. Residues 32–50 carry the RxLR-dEER motif; that stretch reads RSLRGGNEVDSSMSDDGER.

The protein belongs to the RxLR effector family.

It localises to the secreted. It is found in the host nucleus. Its function is as follows. Effector that acts as a broad suppressor of cell death to interrupt plant immunity. Inhibits cell death induced by cell death-inducing proteins, including the PAMP elicitor INF1 from P.infestans. The protein is Secreted RxLR effector protein 22 of Plasmopara viticola (Downy mildew of grapevine).